A 947-amino-acid chain; its full sequence is Valine--tRNA ligase (947 aa).

A 'HIGH' region motif is present at residues 45 to 55 (PNVTGSLHMGH). The 'KMSKS' region signature appears at 591-595 (KMSKS). Lysine 594 provides a ligand contact to ATP.

The protein belongs to the class-I aminoacyl-tRNA synthetase family. ValS type 1 subfamily. In terms of assembly, monomer.

It localises to the cytoplasm. The catalysed reaction is tRNA(Val) + L-valine + ATP = L-valyl-tRNA(Val) + AMP + diphosphate. Functionally, catalyzes the attachment of valine to tRNA(Val). As ValRS can inadvertently accommodate and process structurally similar amino acids such as threonine, to avoid such errors, it has a 'posttransfer' editing activity that hydrolyzes mischarged Thr-tRNA(Val) in a tRNA-dependent manner. The protein is Valine--tRNA ligase of Rhizobium meliloti (strain 1021) (Ensifer meliloti).